The primary structure comprises 291 residues: uncharacterized protein (291 aa).

A run of 10 helical transmembrane segments spans residues Met-1–Ala-21, Ile-26–Leu-46, Pro-67–Val-87, Ser-95–His-115, Thr-117–Leu-137, Phe-149–Phe-169, Phe-179–Phe-199, Ser-208–Ile-228, Val-241–Phe-261, and Trp-270–Ile-290. The region spanning Ile-107–Thr-138 is the EamA domain.

The protein localises to the cell membrane. This is an uncharacterized protein from Haemophilus influenzae (strain ATCC 51907 / DSM 11121 / KW20 / Rd).